A 505-amino-acid polypeptide reads, in one-letter code: Deoxyguanosinetriphosphate triphosphohydrolase (505 aa).

In terms of domain architecture, HD spans 66–273 (RLTHSMEVQQ…MEAADDISYC (208 aa)).

The protein belongs to the dGTPase family. Type 1 subfamily. As to quaternary structure, homotetramer. It depends on Mg(2+) as a cofactor.

The catalysed reaction is dGTP + H2O = 2'-deoxyguanosine + triphosphate + H(+). DGTPase preferentially hydrolyzes dGTP over the other canonical NTPs. The chain is Deoxyguanosinetriphosphate triphosphohydrolase from Salmonella choleraesuis (strain SC-B67).